The primary structure comprises 347 residues: NADH-ubiquinone oxidoreductase chain 2 (347 aa).

Helical transmembrane passes span 2–22 (SPYVLTIMSFSLLLGTTMTLI), 25–45 (HWLTAWMGLEINTLAIIPLMT), 56–76 (AIKYFMIQATASMIILFSAIF), 96–116 (FMMTIALAMKLGLAPFHFWVP), 122–142 (IPLLSGMLLLTWQKIAPISIF), 149–169 (LNMSLLMILSITSTLLGGWGG), 178–197 (ILAYSSIAHMGWMAIIIMIY), 202–219 (ILNLILYLASTITMFMVL), 241–261 (MIIITLTLLSLGGLPPLTGFM), 278–298 (LAMMLALSTLLNLFFYMRIIY), and 326–346 (IPTLTIISSLLLPMTPVFITL).

The protein belongs to the complex I subunit 2 family.

It localises to the mitochondrion inner membrane. It catalyses the reaction a ubiquinone + NADH + 5 H(+)(in) = a ubiquinol + NAD(+) + 4 H(+)(out). Core subunit of the mitochondrial membrane respiratory chain NADH dehydrogenase (Complex I) that is believed to belong to the minimal assembly required for catalysis. Complex I functions in the transfer of electrons from NADH to the respiratory chain. The immediate electron acceptor for the enzyme is believed to be ubiquinone. This Didelphis virginiana (North American opossum) protein is NADH-ubiquinone oxidoreductase chain 2 (MT-ND2).